A 1527-amino-acid polypeptide reads, in one-letter code: ATP-binding cassette sub-family C member 3 (1527 aa).

The Extracellular portion of the chain corresponds to 1–32 (MDALCGSGELGSKFWDSNLSVHTENPDLTPCF). N18 carries an N-linked (GlcNAc...) asparagine glycan. Residues 33 to 53 (QNSLLAWVPCIYLWVALPCYL) form a helical membrane-spanning segment. At 54–73 (LYLRHHCRGYIILSHLSKLK) the chain is on the cytoplasmic side. Residues 74-94 (MVLGVLLWCVSWADLFYSFHG) form a helical membrane-spanning segment. The Extracellular segment spans residues 95-99 (LVHGR). The helical transmembrane segment at 100–120 (APAPVFFVTPLVVGVTMLLAT) threads the bilayer. Residues 121–132 (LLIQYERLQGVQ) are Cytoplasmic-facing. Residues 133 to 153 (SSGVLIIFWFLCVVCAIVPFR) form a helical membrane-spanning segment. Over 154 to 171 (SKILLAKAEGEISDPFRF) the chain is Extracellular. The chain crosses the membrane as a helical span at residues 172-192 (TTFYIHFALVLSALILACFRE). The Cytoplasmic segment spans residues 193–302 (KPPFFSAKNV…RPRKPSFLKA (110 aa)). The helical transmembrane segment at 303 to 323 (LLATFGSSFLISACFKLIQDL) threads the bilayer. An ABC transmembrane type-1 1 domain is found at 311–594 (FLISACFKLI…LPQLISNLTQ (284 aa)). At 324–349 (LSFINPQLLSILIRFISNPMAPSWWG) the chain is on the extracellular side. The helical transmembrane segment at 350–370 (FLVAGLMFLCSMMQSLILQHY) threads the bilayer. Residues 371 to 426 (YHYIFVTGVKFRTGIMGVIYRKALVITNSVKRASTVGEIVNLMSVDAQRFMDLAPF) are Cytoplasmic-facing. The chain crosses the membrane as a helical span at residues 427 to 447 (LNLLWSAPLQIILAIYFLWQN). Residues 448-450 (LGP) lie on the Extracellular side of the membrane. The helical transmembrane segment at 451-471 (SVLAGVAFMVLLIPLNGAVAV) threads the bilayer. The Cytoplasmic segment spans residues 472–533 (KMRAFQVKQM…LLRTAAYLHT (62 aa)). The helical transmembrane segment at 534–554 (TTTFTWMCSPFLVTLITLWVY) threads the bilayer. Residues 555 to 576 (VYVDPNNVLDAEKAFVSVSLFN) are Extracellular-facing. The helical transmembrane segment at 577-597 (ILRLPLNMLPQLISNLTQASV) threads the bilayer. Over 598–963 (SLKRIQQFLS…VELSVFWDYA (366 aa)) the chain is Cytoplasmic. An ABC transporter 1 domain is found at 629-851 (IHSGTFTWAQ…NGSFANFLCN (223 aa)). 661–668 (GPVGCGKS) is a binding site for ATP. 2 positions are modified to phosphoserine: S908 and S911. A disordered region spans residues 910–932 (LSSDGEGQGRPVPRRHLGPSEKV). A helical transmembrane segment spans residues 964 to 984 (KAVGLCTTLAICLLYVGQSAA). In terms of domain architecture, ABC transmembrane type-1 2 spans 971-1252 (TLAICLLYVG…MIRMMSDLES (282 aa)). The Extracellular segment spans residues 985–1021 (AIGANVWLSAWTNDAMADSRQNNTSLRLGVYAALGIL). 2 N-linked (GlcNAc...) asparagine glycosylation sites follow: N1006 and N1007. The chain crosses the membrane as a helical span at residues 1022-1042 (QGFLVMLAAMAMAAGGIQAAR). Over 1043–1085 (VLHQALLHNKIRSPQSFFDTTPSGRILNCFSKDIYVVDEVLAP) the chain is Cytoplasmic. The chain crosses the membrane as a helical span at residues 1086–1106 (VILMLLNSFFNAISTLVVIMA). Residue S1107 is a topological domain, extracellular. Residues 1108–1128 (TPLFTVVILPLAVLYTLVQRF) form a helical membrane-spanning segment. Over 1129–1199 (YAATSRQLKR…ISNRWLSIGV (71 aa)) the chain is Cytoplasmic. A helical membrane pass occupies residues 1200-1220 (EFVGNCVVLFAALFAVIGRSS). Over 1221–1222 (LN) the chain is Extracellular. Residues 1223-1243 (PGLVGLSVSYSLQVTFALNWM) form a helical membrane-spanning segment. Residues 1244–1527 (IRMMSDLESN…YGMARDAGLA (284 aa)) lie on the Cytoplasmic side of the membrane. The ABC transporter 2 domain maps to 1291–1523 (FRNYSVRYRP…RGIFYGMARD (233 aa)). Residue 1323-1330 (GRTGAGKS) coordinates ATP.

The protein belongs to the ABC transporter superfamily. ABCC family. Conjugate transporter (TC 3.A.1.208) subfamily. As to expression, mainly expressed in the liver. Also expressed in small intestine, colon, prostate, testis, brain and at a lower level in the kidney. In testis, localized to peritubular myoid cells, Leydig cells, along the basal membrane of Sertoli cells and moderately in the adluminal compartment of the seminiferous tubules.

The protein resides in the basolateral cell membrane. Its subcellular location is the basal cell membrane. The enzyme catalyses taurocholate(in) + ATP + H2O = taurocholate(out) + ADP + phosphate + H(+). The catalysed reaction is glycocholate(in) + ATP + H2O = glycocholate(out) + ADP + phosphate + H(+). It carries out the reaction taurolithocholate 3-sulfate(in) + ATP + H2O = taurolithocholate 3-sulfate(out) + ADP + phosphate + H(+). It catalyses the reaction taurochenodeoxycholate 3-sulfate(in) + ATP + H2O = taurochenodeoxycholate 3-sulfate(out) + ADP + phosphate + H(+). The enzyme catalyses an S-substituted glutathione(in) + ATP + H2O = an S-substituted glutathione(out) + ADP + phosphate + H(+). The catalysed reaction is ATP + H2O + xenobioticSide 1 = ADP + phosphate + xenobioticSide 2.. It carries out the reaction 17beta-estradiol 17-O-(beta-D-glucuronate)(in) + ATP + H2O = 17beta-estradiol 17-O-(beta-D-glucuronate)(out) + ADP + phosphate + H(+). It catalyses the reaction dehydroepiandrosterone 3-sulfate(in) + ATP + H2O = dehydroepiandrosterone 3-sulfate(out) + ADP + phosphate + H(+). The enzyme catalyses leukotriene C4(in) + ATP + H2O = leukotriene C4(out) + ADP + phosphate + H(+). The catalysed reaction is (4Z,15Z)-bilirubin IXalpha C8-beta-D-glucuronoside(in) + ATP + H2O = (4Z,15Z)-bilirubin IXalpha C8-beta-D-glucuronoside(out) + ADP + phosphate + H(+). It carries out the reaction (4Z,15Z)-bilirubin IXalpha C8,C12-beta-D-bisglucuronoside(in) + ATP + H2O = (4Z,15Z)-bilirubin IXalpha C8,C12-beta-D-bisglucuronoside(out) + ADP + phosphate + H(+). Its function is as follows. ATP-dependent transporter of the ATP-binding cassette (ABC) family that binds and hydrolyzes ATP to enable active transport of various substrates including many drugs, toxicants and endogenous compound across cell membranes. Transports glucuronide conjugates such as bilirubin diglucuronide, estradiol-17-beta-o-glucuronide and GSH conjugates such as leukotriene C4 (LTC4). Transports also various bile salts (taurocholate, glycocholate, taurochenodeoxycholate-3-sulfate, taurolithocholate- 3-sulfate). Does not contribute substantially to bile salt physiology but provides an alternative route for the export of bile acids and glucuronides from cholestatic hepatocytes. May contribute to regulate the transport of organic compounds in testes across the blood-testis-barrier. Can confer resistance to various anticancer drugs, methotrexate, tenoposide and etoposide, by decreasing accumulation of these drugs in cells. The sequence is that of ATP-binding cassette sub-family C member 3 from Homo sapiens (Human).